Here is a 176-residue protein sequence, read N- to C-terminus: MVKTAQLLQTLNDQLSELAALVAPLAEHATLSPRFDRQLFHTRSTLMQAYLAEAQHNFNQLRQAVERQQLPQVVWIAERLAAQIAALRRETATWSLRSWDHASPTLSRWQRRRLQHQEYERRLLAMRDQRQRQLAQATSLDEQQRLGKEVEAYSGRLARCRQALDKIENVLARLTR.

The protein belongs to the PriC family. In terms of assembly, component of the replication restart primosome, which is composed of PriA, PriB, PriC, DnaB and DnaT; DnaG primase associates transiently with this complex. Interacts with the C-terminus of SSB; this interaction is required to load the main replicative helicase onto substrate replication forks. Interacts with helicase DnaB alone and in the DnaB-DnaC complex, probably 1:1 binding with DnaB. Interacts with DnaT.

In terms of biological role, involved in the restart of stalled replication forks, which reloads the DnaB replicative helicase on sites other than the origin of replication. Recognizes abandoned replication forks and remodels DNA single-stranded binding protein (SSB) on ssDNA to uncover a loading site for DnaB. There are several restart pathways, the PriA-PriC pathway is a minor restart pathway. Part of the minor PriC-Rep pathway for restart of stalled replication forks, which has a different substrate specificity than PriA. Part of the major restart pathway with PriA, PriB, DnaB, DnaT and DnaG primase. priB and priC have redundant roles in the cell. Binds 7-9 nucleotides of single-stranded (ss)DNA. The chain is Replication restart protein PriC from Klebsiella pneumoniae subsp. pneumoniae (strain ATCC 700721 / MGH 78578).